The following is a 154-amino-acid chain: Snaclec salmorin subunit A (154 aa).

A signal peptide spans 1–23; that stretch reads MGRFIFVSFGLLVVFLSLSGTGA. Disulfide bonds link Cys27–Cys38, Cys55–Cys152, and Cys127–Cys144. The C-type lectin domain maps to 34–153; the sequence is NNGHCYQAFN…CGQRNPFVCE (120 aa). Residues Ser66, Glu68, and Glu72 each coordinate Ca(2+). Position 153 (Glu153) interacts with Ca(2+).

Belongs to the snaclec family. In terms of assembly, heterodimer of subunits A and B; disulfide-linked. As to expression, expressed by the venom gland.

The protein resides in the secreted. In terms of biological role, inhibits thrombin-induced fibrinogen clotting and factor Xa-induced prothrombin activation. Binds to thrombin and prothrombin exosites. The polypeptide is Snaclec salmorin subunit A (Gloydius brevicauda (Korean slamosa snake)).